Consider the following 112-residue polypeptide: UPF0342 protein SPT_0901 (112 aa).

It belongs to the UPF0342 family.

The sequence is that of UPF0342 protein SPT_0901 from Streptococcus pneumoniae (strain Taiwan19F-14).